The sequence spans 122 residues: Large ribosomal subunit protein uL14 (122 aa).

The protein belongs to the universal ribosomal protein uL14 family. Part of the 50S ribosomal subunit. Forms a cluster with proteins L3 and L19. In the 70S ribosome, L14 and L19 interact and together make contacts with the 16S rRNA in bridges B5 and B8.

Functionally, binds to 23S rRNA. Forms part of two intersubunit bridges in the 70S ribosome. The polypeptide is Large ribosomal subunit protein uL14 (Methylococcus capsulatus (strain ATCC 33009 / NCIMB 11132 / Bath)).